Here is a 189-residue protein sequence, read N- to C-terminus: uncharacterized protein (189 aa).

This is an uncharacterized protein from Aquifex aeolicus (strain VF5).